Consider the following 3890-residue polypeptide: Extracellular matrix-binding protein EbhB (3890 aa).

A signal peptide spans 1 to 39 (MNYRDKIQKFSIRKYTVGTFSTVIATLVFLGFNTSQAHA). The span at 41–59 (ETNQPASVVKQKQQSNNEQ) shows a compositional bias: polar residues. Disordered regions lie at residues 41 to 152 (ETNQ…GNDN), 249 to 277 (MPQR…PRSV), 1347 to 1372 (NEKA…NATT), and 2418 to 2438 (TITP…TLTA). A compositionally biased stretch (low complexity) spans 65-78 (SQVQNSQNSQNSQS). Residues 79–117 (LSATHENEQPNNSQANLVNQKVAQSSTTNDEQPASQNVN) are compositionally biased toward polar residues. Basic and acidic residues predominate over residues 130–140 (PDKEESKHKQN). Composition is skewed to polar residues over residues 141 to 151 (ESQSANKNGND), 250 to 266 (PQRQ…QTRS), 1360 to 1372 (YRTT…NATT), and 2427 to 2438 (HSVSSNPSTLTA). FIVAR domains are found at residues 2524-2580 (AKNH…VSDA), 2610-2666 (SKNN…ISDE), 2687-2750 (DTHA…VQSA), 2780-2836 (AKTK…IAAE), 2864-2919 (AKTQ…IRQN), 2947-3002 (AKNQ…INTN), 3030-3085 (AKTQ…INDK), 3154-3212 (AMTK…VNQK), 3280-3339 (AMTG…VNNA), 3407-3465 (AMGN…VNRA), 3533-3591 (AMGN…VTEA), 3659-3717 (AMNT…ITQK), and 3785-3843 (AMAN…VEAA).

This chain is Extracellular matrix-binding protein EbhB (ebhB), found in Staphylococcus aureus (strain N315).